The following is an 874-amino-acid chain: Alanine--tRNA ligase (874 aa).

Residues His-562, His-566, Cys-664, and His-668 each contribute to the Zn(2+) site.

The protein belongs to the class-II aminoacyl-tRNA synthetase family. Zn(2+) is required as a cofactor.

It localises to the cytoplasm. The enzyme catalyses tRNA(Ala) + L-alanine + ATP = L-alanyl-tRNA(Ala) + AMP + diphosphate. Catalyzes the attachment of alanine to tRNA(Ala) in a two-step reaction: alanine is first activated by ATP to form Ala-AMP and then transferred to the acceptor end of tRNA(Ala). Also edits incorrectly charged Ser-tRNA(Ala) and Gly-tRNA(Ala) via its editing domain. The protein is Alanine--tRNA ligase of Shewanella loihica (strain ATCC BAA-1088 / PV-4).